Here is a 264-residue protein sequence, read N- to C-terminus: JmjC domain-containing protein 8 (264 aa).

Residues 1–23 (MAPASRLLALWALAAVALPGSGA) form the signal peptide. N-linked (GlcNAc...) asparagine glycans are attached at residues asparagine 130, asparagine 140, and asparagine 209. The region spanning 131–264 (DTLYFFGDNN…TSVFISTFLG (134 aa)) is the JmjC domain.

In terms of assembly, oligomer. Dimer. Interacts with PKM; regulates angiogenesis and metabolism. N-glycosylated.

The protein resides in the endoplasmic reticulum lumen. It is found in the cytoplasm. Its function is as follows. Functions as a positive regulator of TNF-induced NF-kappa-B signaling. Regulates angiogenesis and cellular metabolism through interaction with PKM. This is JmjC domain-containing protein 8 from Homo sapiens (Human).